Consider the following 64-residue polypeptide: Disintegrin lebein-1-beta (64 aa).

Positions 1–64 (NSGNPCCDPV…SDCPRNPYKD (64 aa)) constitute a Disintegrin domain. 4 disulfide bridges follow: cysteine 6–cysteine 29, cysteine 20–cysteine 26, cysteine 25–cysteine 50, and cysteine 38–cysteine 57. Residues 42 to 44 (RGD) carry the Cell attachment site motif.

The protein belongs to the disintegrin family. Dimeric disintegrin subfamily. As to quaternary structure, heterodimer with subunit alpha; disulfide-linked. Expressed by the venom gland.

Its subcellular location is the secreted. In terms of biological role, strongly inhibits ADP-induced platelet aggregation on human platelet-rich plasma. Also avidly binds to the laminin-binding beta-1 integrins (alpha-3/beta-1, alpha-6/beta-1, and alpha-7/beta-1) in an RGD-independent manner. The polypeptide is Disintegrin lebein-1-beta (Macrovipera lebetinus (Levantine viper)).